The sequence spans 397 residues: Riboflavin biosynthesis protein RibBA (397 aa).

Positions 1-199 (MFHRIEEALE…IEDLIAYRRH (199 aa)) are DHBP synthase. D-ribulose 5-phosphate contacts are provided by residues 26–27 (RE), Asp31, 138–142 (RAGHT), and Glu162. Residue Glu27 coordinates Mg(2+). Mg(2+) is bound at residue His141. The GTP cyclohydrolase II stretch occupies residues 200–397 (HETLVTREVE…VNKLGHLLNL (198 aa)). 250–254 (RVHSE) serves as a coordination point for GTP. 3 residues coordinate Zn(2+): Cys255, Cys266, and Cys268. Residues Gln271, 293–295 (EGR), and Thr315 contribute to the GTP site. The active-site Proton acceptor; for GTP cyclohydrolase activity is the Asp327. Arg329 acts as the Nucleophile; for GTP cyclohydrolase activity in catalysis. 2 residues coordinate GTP: Thr350 and Lys355.

It in the N-terminal section; belongs to the DHBP synthase family. The protein in the C-terminal section; belongs to the GTP cyclohydrolase II family. Requires Mg(2+) as cofactor. Mn(2+) is required as a cofactor. The cofactor is Zn(2+).

The catalysed reaction is D-ribulose 5-phosphate = (2S)-2-hydroxy-3-oxobutyl phosphate + formate + H(+). It catalyses the reaction GTP + 4 H2O = 2,5-diamino-6-hydroxy-4-(5-phosphoribosylamino)-pyrimidine + formate + 2 phosphate + 3 H(+). The protein operates within cofactor biosynthesis; riboflavin biosynthesis; 2-hydroxy-3-oxobutyl phosphate from D-ribulose 5-phosphate: step 1/1. It participates in cofactor biosynthesis; riboflavin biosynthesis; 5-amino-6-(D-ribitylamino)uracil from GTP: step 1/4. Its function is as follows. Catalyzes the conversion of D-ribulose 5-phosphate to formate and 3,4-dihydroxy-2-butanone 4-phosphate. Catalyzes the conversion of GTP to 2,5-diamino-6-ribosylamino-4(3H)-pyrimidinone 5'-phosphate (DARP), formate and pyrophosphate. This chain is Riboflavin biosynthesis protein RibBA, found in Bacillus cereus (strain AH187).